We begin with the raw amino-acid sequence, 139 residues long: D-ribose pyranase (139 aa).

His20 functions as the Proton donor in the catalytic mechanism. Residues Asp28, His106, and 128–130 each bind substrate; that span reads YAN.

Belongs to the RbsD / FucU family. RbsD subfamily. In terms of assembly, homodecamer.

The protein localises to the cytoplasm. It catalyses the reaction beta-D-ribopyranose = beta-D-ribofuranose. Its pathway is carbohydrate metabolism; D-ribose degradation; D-ribose 5-phosphate from beta-D-ribopyranose: step 1/2. Catalyzes the interconversion of beta-pyran and beta-furan forms of D-ribose. The protein is D-ribose pyranase of Pectobacterium carotovorum subsp. carotovorum (strain PC1).